We begin with the raw amino-acid sequence, 374 residues long: Tetraacyldisaccharide 4'-kinase (374 aa).

43-50 (TMGGTGKT) contacts ATP.

This sequence belongs to the LpxK family.

The enzyme catalyses a lipid A disaccharide + ATP = a lipid IVA + ADP + H(+). It functions in the pathway glycolipid biosynthesis; lipid IV(A) biosynthesis; lipid IV(A) from (3R)-3-hydroxytetradecanoyl-[acyl-carrier-protein] and UDP-N-acetyl-alpha-D-glucosamine: step 6/6. Transfers the gamma-phosphate of ATP to the 4'-position of a tetraacyldisaccharide 1-phosphate intermediate (termed DS-1-P) to form tetraacyldisaccharide 1,4'-bis-phosphate (lipid IVA). This Leptospira biflexa serovar Patoc (strain Patoc 1 / Ames) protein is Tetraacyldisaccharide 4'-kinase.